The sequence spans 126 residues: Holo-[acyl-carrier-protein] synthase (126 aa).

Residues aspartate 9 and glutamate 58 each coordinate Mg(2+).

This sequence belongs to the P-Pant transferase superfamily. AcpS family. The cofactor is Mg(2+).

The protein resides in the cytoplasm. It catalyses the reaction apo-[ACP] + CoA = holo-[ACP] + adenosine 3',5'-bisphosphate + H(+). Its function is as follows. Transfers the 4'-phosphopantetheine moiety from coenzyme A to a Ser of acyl-carrier-protein. This Sodalis glossinidius (strain morsitans) protein is Holo-[acyl-carrier-protein] synthase.